The chain runs to 78 residues: NAD(P)H-quinone oxidoreductase subunit O (78 aa).

The protein belongs to the complex I NdhO subunit family. As to quaternary structure, NDH-1 can be composed of about 15 different subunits; different subcomplexes with different compositions have been identified which probably have different functions.

The protein resides in the cell inner membrane. It carries out the reaction a plastoquinone + NADH + (n+1) H(+)(in) = a plastoquinol + NAD(+) + n H(+)(out). The catalysed reaction is a plastoquinone + NADPH + (n+1) H(+)(in) = a plastoquinol + NADP(+) + n H(+)(out). In terms of biological role, NDH-1 shuttles electrons from an unknown electron donor, via FMN and iron-sulfur (Fe-S) centers, to quinones in the respiratory and/or the photosynthetic chain. The immediate electron acceptor for the enzyme in this species is believed to be plastoquinone. Couples the redox reaction to proton translocation, and thus conserves the redox energy in a proton gradient. Cyanobacterial NDH-1 also plays a role in inorganic carbon-concentration. The polypeptide is NAD(P)H-quinone oxidoreductase subunit O (Gloeobacter violaceus (strain ATCC 29082 / PCC 7421)).